A 315-amino-acid chain; its full sequence is 4-hydroxy-3-methylbut-2-enyl diphosphate reductase (315 aa).

A [4Fe-4S] cluster-binding site is contributed by Cys-12. Residues His-40 and His-74 each contribute to the (2E)-4-hydroxy-3-methylbut-2-enyl diphosphate site. The dimethylallyl diphosphate site is built by His-40 and His-74. Isopentenyl diphosphate contacts are provided by His-40 and His-74. Position 96 (Cys-96) interacts with [4Fe-4S] cluster. A (2E)-4-hydroxy-3-methylbut-2-enyl diphosphate-binding site is contributed by His-124. His-124 lines the dimethylallyl diphosphate pocket. His-124 is an isopentenyl diphosphate binding site. Glu-126 acts as the Proton donor in catalysis. A (2E)-4-hydroxy-3-methylbut-2-enyl diphosphate-binding site is contributed by Thr-167. Cys-213 is a binding site for [4Fe-4S] cluster. Residues Ser-241, Ser-242, Asn-243, and Ser-290 each contribute to the (2E)-4-hydroxy-3-methylbut-2-enyl diphosphate site. 4 residues coordinate dimethylallyl diphosphate: Ser-241, Ser-242, Asn-243, and Ser-290. Isopentenyl diphosphate contacts are provided by Ser-241, Ser-242, Asn-243, and Ser-290.

The protein belongs to the IspH family. [4Fe-4S] cluster serves as cofactor.

The catalysed reaction is isopentenyl diphosphate + 2 oxidized [2Fe-2S]-[ferredoxin] + H2O = (2E)-4-hydroxy-3-methylbut-2-enyl diphosphate + 2 reduced [2Fe-2S]-[ferredoxin] + 2 H(+). It catalyses the reaction dimethylallyl diphosphate + 2 oxidized [2Fe-2S]-[ferredoxin] + H2O = (2E)-4-hydroxy-3-methylbut-2-enyl diphosphate + 2 reduced [2Fe-2S]-[ferredoxin] + 2 H(+). Its pathway is isoprenoid biosynthesis; dimethylallyl diphosphate biosynthesis; dimethylallyl diphosphate from (2E)-4-hydroxy-3-methylbutenyl diphosphate: step 1/1. It functions in the pathway isoprenoid biosynthesis; isopentenyl diphosphate biosynthesis via DXP pathway; isopentenyl diphosphate from 1-deoxy-D-xylulose 5-phosphate: step 6/6. Its function is as follows. Catalyzes the conversion of 1-hydroxy-2-methyl-2-(E)-butenyl 4-diphosphate (HMBPP) into a mixture of isopentenyl diphosphate (IPP) and dimethylallyl diphosphate (DMAPP). Acts in the terminal step of the DOXP/MEP pathway for isoprenoid precursor biosynthesis. In Chloroherpeton thalassium (strain ATCC 35110 / GB-78), this protein is 4-hydroxy-3-methylbut-2-enyl diphosphate reductase.